The following is a 234-amino-acid chain: Ubiquinone biosynthesis O-methyltransferase (234 aa).

The S-adenosyl-L-methionine site is built by Arg40, Gly59, Asp80, and Met123.

Belongs to the methyltransferase superfamily. UbiG/COQ3 family.

It carries out the reaction a 3-demethylubiquinol + S-adenosyl-L-methionine = a ubiquinol + S-adenosyl-L-homocysteine + H(+). The enzyme catalyses a 3-(all-trans-polyprenyl)benzene-1,2-diol + S-adenosyl-L-methionine = a 2-methoxy-6-(all-trans-polyprenyl)phenol + S-adenosyl-L-homocysteine + H(+). It participates in cofactor biosynthesis; ubiquinone biosynthesis. O-methyltransferase that catalyzes the 2 O-methylation steps in the ubiquinone biosynthetic pathway. This Coxiella burnetii (strain CbuK_Q154) (Coxiella burnetii (strain Q154)) protein is Ubiquinone biosynthesis O-methyltransferase.